A 413-amino-acid polypeptide reads, in one-letter code: Gamma-DL-glutamyl hydrolase (413 aa).

A signal peptide spans 1 to 32 (MNTLANWKKFLLVAVIICFLVPIMTKAEIAEA). 3 NlpC/P60 domains span residues 33–159 (DTSS…RRIA), 163–287 (ATAD…RRFD), and 291–413 (IPKE…IRVQ). Residue C194 is the Nucleophile of the active site. H247 acts as the Proton acceptor in catalysis. Q259 is an active-site residue.

It belongs to the peptidase C40 family.

The protein resides in the secreted. The protein localises to the cell wall. Its activity is regulated as follows. Inhibited by pretreatment with 1 mM 4-(hydroxymercuri)benzoate, a sulfhydryl inhibitor. Cleaves, in an endo-type manner, the gamma-glutamyl bond between D-glutamate and L-glutamate of poly-gamma-glutamate (PGA). This is Gamma-DL-glutamyl hydrolase (pgdS) from Bacillus subtilis (strain 168).